The primary structure comprises 351 residues: Farnesyl pyrophosphate synthase (351 aa).

Isopentenyl diphosphate contacts are provided by Lys-51, Arg-54, and Gln-92. Mg(2+) is bound by residues Asp-99 and Asp-103. Arg-108 is a dimethylallyl diphosphate binding site. Arg-109 contributes to the isopentenyl diphosphate binding site. Dimethylallyl diphosphate is bound by residues Lys-196, Thr-197, Gln-236, Lys-253, and Lys-262.

It belongs to the FPP/GGPP synthase family. The cofactor is Mg(2+).

The enzyme catalyses isopentenyl diphosphate + dimethylallyl diphosphate = (2E)-geranyl diphosphate + diphosphate. It carries out the reaction isopentenyl diphosphate + (2E)-geranyl diphosphate = (2E,6E)-farnesyl diphosphate + diphosphate. It functions in the pathway isoprenoid biosynthesis; farnesyl diphosphate biosynthesis; farnesyl diphosphate from geranyl diphosphate and isopentenyl diphosphate: step 1/1. The protein operates within isoprenoid biosynthesis; geranyl diphosphate biosynthesis; geranyl diphosphate from dimethylallyl diphosphate and isopentenyl diphosphate: step 1/1. Farnesyl pyrophosphate synthase; part of the second module of ergosterol biosynthesis pathway that includes the middle steps of the pathway. ERG20 catalyzes the sequential condensation of isopentenyl pyrophosphate with dimethylallyl pyrophosphate, and then with the resultant geranylpyrophosphate to the ultimate product farnesyl pyrophosphate. The second module is carried out in the vacuole and involves the formation of farnesyl diphosphate, which is also an important intermediate in the biosynthesis of ubiquinone, dolichol, heme and prenylated proteins. Activity by the mevalonate kinase ERG12 first converts mevalonate into 5-phosphomevalonate. 5-phosphomevalonate is then further converted to 5-diphosphomevalonate by the phosphomevalonate kinase ERG8. The diphosphomevalonate decarboxylase MVD then produces isopentenyl diphosphate. The isopentenyl-diphosphate delta-isomerase IDI1 then catalyzes the 1,3-allylic rearrangement of the homoallylic substrate isopentenyl (IPP) to its highly electrophilic allylic isomer, dimethylallyl diphosphate (DMAPP). Finally the farnesyl diphosphate synthase ERG20 catalyzes the sequential condensation of isopentenyl pyrophosphate with dimethylallyl pyrophosphate, and then with the resultant geranylpyrophosphate to the ultimate product farnesyl pyrophosphate. The polypeptide is Farnesyl pyrophosphate synthase (Candida albicans (strain SC5314 / ATCC MYA-2876) (Yeast)).